Here is a 273-residue protein sequence, read N- to C-terminus: MLILKTVKQLQEFVASAGDEIGFVPTMGALHDGHMSLIKKCVSENAVSIVSTFVNPTQFLPGEDLEKYPKKEESDIKICELCGVSAMFIPDAKEMYFDDEPCIIAPKKYSSILEGKSRPGHFDGVLRVLVKLFNLTRAKRVYMGKKDAQQLVIVQNMVKTLFLNLQVVPCEIVRESDGLALSSRNAYLSEEDKCNALRLSRALINASNLIKGGELDTSEIKTGMLKTLEPLTVDYVAIVDRDFNQISKVELGNTIILVAANVGKTRLIDNIWV.

Position 27–34 (27–34 (MGALHDGH)) interacts with ATP. The active-site Proton donor is the histidine 34. Glutamine 58 provides a ligand contact to (R)-pantoate. Residue glutamine 58 participates in beta-alanine binding. 144–147 (GKKD) contacts ATP. Glutamine 150 contacts (R)-pantoate. Residues valine 173 and 181–184 (LSSR) each bind ATP.

Belongs to the pantothenate synthetase family. As to quaternary structure, homodimer.

The protein localises to the cytoplasm. The catalysed reaction is (R)-pantoate + beta-alanine + ATP = (R)-pantothenate + AMP + diphosphate + H(+). The protein operates within cofactor biosynthesis; (R)-pantothenate biosynthesis; (R)-pantothenate from (R)-pantoate and beta-alanine: step 1/1. Its function is as follows. Catalyzes the condensation of pantoate with beta-alanine in an ATP-dependent reaction via a pantoyl-adenylate intermediate. The polypeptide is Pantothenate synthetase (Campylobacter curvus (strain 525.92)).